A 937-amino-acid chain; its full sequence is Isoleucine--tRNA ligase (937 aa).

The short motif at 58–68 is the 'HIGH' region element; that stretch reads PYANGSIHIGH. L-isoleucyl-5'-AMP is bound at residue Glu-561. The short motif at 602 to 606 is the 'KMSKS' region element; it reads KMSKS. An ATP-binding site is contributed by Lys-605. Zn(2+) contacts are provided by Cys-900, Cys-903, Cys-920, and Cys-923.

It belongs to the class-I aminoacyl-tRNA synthetase family. IleS type 1 subfamily. In terms of assembly, monomer. Requires Zn(2+) as cofactor.

Its subcellular location is the cytoplasm. The catalysed reaction is tRNA(Ile) + L-isoleucine + ATP = L-isoleucyl-tRNA(Ile) + AMP + diphosphate. Functionally, catalyzes the attachment of isoleucine to tRNA(Ile). As IleRS can inadvertently accommodate and process structurally similar amino acids such as valine, to avoid such errors it has two additional distinct tRNA(Ile)-dependent editing activities. One activity is designated as 'pretransfer' editing and involves the hydrolysis of activated Val-AMP. The other activity is designated 'posttransfer' editing and involves deacylation of mischarged Val-tRNA(Ile). The polypeptide is Isoleucine--tRNA ligase (Pectobacterium carotovorum subsp. carotovorum (strain PC1)).